The sequence spans 354 residues: Probable cinnamyl alcohol dehydrogenase 1 (354 aa).

Zn(2+) is bound at residue cysteine 47. Position 49 (serine 49) interacts with NADP(+). Zn(2+) is bound by residues histidine 69, glutamate 70, cysteine 100, cysteine 103, cysteine 106, cysteine 114, and cysteine 163. NADP(+) is bound by residues threonine 167, 188–193 (GLGGVG), 211–216 (SSSDKK), threonine 251, glycine 275, and 296–298 (SFI).

It belongs to the zinc-containing alcohol dehydrogenase family. As to quaternary structure, homodimer. Zn(2+) is required as a cofactor.

The catalysed reaction is (E)-cinnamyl alcohol + NADP(+) = (E)-cinnamaldehyde + NADPH + H(+). The enzyme catalyses (E)-coniferol + NADP(+) = (E)-coniferaldehyde + NADPH + H(+). It carries out the reaction (E)-sinapyl alcohol + NADP(+) = (E)-sinapaldehyde + NADPH + H(+). It catalyses the reaction (E)-4-coumaroyl alcohol + NADP(+) = (E)-4-coumaraldehyde + NADPH + H(+). The catalysed reaction is (E)-caffeyl alcohol + NADP(+) = (E)-caffeyl aldehyde + NADPH + H(+). It functions in the pathway aromatic compound metabolism; phenylpropanoid biosynthesis. In terms of biological role, involved in lignin biosynthesis. Catalyzes the final step specific for the production of lignin monomers. Catalyzes the NADPH-dependent reduction of coniferaldehyde, 5-hydroxyconiferaldehyde, sinapaldehyde, 4-coumaraldehyde and caffeyl aldehyde to their respective alcohols. The polypeptide is Probable cinnamyl alcohol dehydrogenase 1 (CAD1) (Eucalyptus gunnii (Cider gum)).